The primary structure comprises 1115 residues: Lateral signaling target protein 2 homolog (1115 aa).

Disordered stretches follow at residues 308–488 (PLGS…DSDS), 545–586 (SEDD…PSTS), 600–742 (RLPS…SLSD), and 879–1027 (VQSS…PDGK). Residues 322-361 (NNSSSTTNTSNNNNNNTNNNNSSSGSDCTNNDKTGTTTNT) are compositionally biased toward low complexity. The segment covering 363–373 (KPVERLVDHRN) has biased composition (basic and acidic residues). Low complexity-rich tracts occupy residues 374–417 (NNTT…TPTA) and 425–444 (PSHS…NSPA). Acidic residues predominate over residues 449-488 (YDDDDEDDDDDDVHADVEEDEDESGILDSDEHDLNDDSDS). Low complexity-rich tracts occupy residues 558–577 (QQQQ…QQQQ) and 600–614 (RLPS…SSNN). Ser603 and Ser604 each carry phosphoserine. Over residues 615–628 (QQMTIKSPSEQTTT) the composition is skewed to polar residues. Basic residues predominate over residues 632 to 655 (SNRHRHHSHHHHHHHHSHHHHHHQ). Positions 658-676 (AAVAVAAAQDEQHNNNQPH) are enriched in low complexity. A compositionally biased stretch (basic residues) spans 677–706 (SHSHSSSHHHHHNHQSHSHPHRANRSTRKR). Composition is skewed to low complexity over residues 714–726 (TITT…GGEQ), 733–742 (DSSTASSLSD), and 881–901 (SSNS…AARS). Ser908 bears the Phosphoserine mark. 2 stretches are compositionally biased toward low complexity: residues 921–975 (QQQQ…SPVS) and 988–1020 (TTTT…MSPP). An FYVE-type zinc finger spans residues 1025–1085 (DGKAPRCMSC…VCRECFMREV (61 aa)). Residues Cys1031, Cys1034, Cys1047, Cys1050, Cys1055, Cys1058, Cys1077, and Cys1080 each coordinate Zn(2+). Positions 1088–1115 (SHSHGQSQSQIHSPTQQAGGRPQAASAS) are disordered. Low complexity predominate over residues 1090–1100 (SHGQSQSQIHS).

The protein belongs to the lst-2 family.

In terms of biological role, negative regulator of epidermal growth factor receptor (EGFR) signaling. The protein is Lateral signaling target protein 2 homolog of Drosophila grimshawi (Hawaiian fruit fly).